Reading from the N-terminus, the 437-residue chain is Zinc finger CCCH domain-containing protein 40 (437 aa).

The segment at 6–33 (MYKTKLCILFNKTGDCSRPNCTFAHGNA) adopts a C3H1-type zinc-finger fold. The disordered stretch occupies residues 35–107 (LRRPGESSFT…MPFENRRDKD (73 aa)). Positions 48–85 (HNMDSDLRDRRHNMDSDLRDRLGRQFSPERRPSLDRSG) are enriched in basic and acidic residues. A coiled-coil region spans residues 145–244 (NNVLEEQLKD…LGNQLSTYLA (100 aa)). A Phosphoserine modification is found at Ser259. Disordered stretches follow at residues 266–360 (RNLR…RRRF) and 380–437 (EFDD…DDSV). Basic and acidic residues predominate over residues 307–319 (RGEEEKVENEKKR). Acidic residues-rich tracts occupy residues 333-343 (EEESGAWNDED) and 383-392 (DVAESEEENP). Residues 426-437 (MEQKKAYDDDSV) show a composition bias toward basic and acidic residues.

The sequence is that of Zinc finger CCCH domain-containing protein 40 from Arabidopsis thaliana (Mouse-ear cress).